A 561-amino-acid chain; its full sequence is Dihydroxy-acid dehydratase (561 aa).

Residue Cys-50 coordinates [2Fe-2S] cluster. Asp-82 serves as a coordination point for Mg(2+). Cys-123 contributes to the [2Fe-2S] cluster binding site. The Mg(2+) site is built by Asp-124 and Lys-125. N6-carboxylysine is present on Lys-125. Cys-195 lines the [2Fe-2S] cluster pocket. Glu-447 is a Mg(2+) binding site. Ser-473 (proton acceptor) is an active-site residue.

It belongs to the IlvD/Edd family. Homodimer. The cofactor is [2Fe-2S] cluster. Requires Mg(2+) as cofactor.

The catalysed reaction is (2R)-2,3-dihydroxy-3-methylbutanoate = 3-methyl-2-oxobutanoate + H2O. The enzyme catalyses (2R,3R)-2,3-dihydroxy-3-methylpentanoate = (S)-3-methyl-2-oxopentanoate + H2O. It functions in the pathway amino-acid biosynthesis; L-isoleucine biosynthesis; L-isoleucine from 2-oxobutanoate: step 3/4. Its pathway is amino-acid biosynthesis; L-valine biosynthesis; L-valine from pyruvate: step 3/4. Functionally, functions in the biosynthesis of branched-chain amino acids. Catalyzes the dehydration of (2R,3R)-2,3-dihydroxy-3-methylpentanoate (2,3-dihydroxy-3-methylvalerate) into 2-oxo-3-methylpentanoate (2-oxo-3-methylvalerate) and of (2R)-2,3-dihydroxy-3-methylbutanoate (2,3-dihydroxyisovalerate) into 2-oxo-3-methylbutanoate (2-oxoisovalerate), the penultimate precursor to L-isoleucine and L-valine, respectively. The protein is Dihydroxy-acid dehydratase of Acaryochloris marina (strain MBIC 11017).